The chain runs to 114 residues: T cell receptor beta variable 5-6 (114 aa).

The first 21 residues, 1–21, serve as a signal peptide directing secretion; the sequence is MGPGLLCWALLCLLGAGLVDA. The 93-residue stretch at 22–114 folds into the Ig-like domain; sequence GVTQSPTHLI…SALYLCASSL (93 aa). The cysteines at positions 42 and 110 are disulfide-linked. Asn-90 is a glycosylation site (N-linked (GlcNAc...) asparagine).

Alpha-beta TR is a heterodimer composed of an alpha and beta chain; disulfide-linked. The alpha-beta TR is associated with the transmembrane signaling CD3 coreceptor proteins to form the TR-CD3 (TcR or TCR). The assembly of alpha-beta TR heterodimers with CD3 occurs in the endoplasmic reticulum where a single alpha-beta TR heterodimer associates with one CD3D-CD3E heterodimer, one CD3G-CD3E heterodimer and one CD247 homodimer forming a stable octameric structure. CD3D-CD3E and CD3G-CD3E heterodimers preferentially associate with TR alpha and TR beta chains, respectively. The association of the CD247 homodimer is the last step of TcR assembly in the endoplasmic reticulum and is required for transport to the cell surface.

Its subcellular location is the cell membrane. Functionally, v region of the variable domain of T cell receptor (TR) beta chain that participates in the antigen recognition. Alpha-beta T cell receptors are antigen specific receptors which are essential to the immune response and are present on the cell surface of T lymphocytes. Recognize peptide-major histocompatibility (MH) (pMH) complexes that are displayed by antigen presenting cells (APC), a prerequisite for efficient T cell adaptive immunity against pathogens. Binding of alpha-beta TR to pMH complex initiates TR-CD3 clustering on the cell surface and intracellular activation of LCK that phosphorylates the ITAM motifs of CD3G, CD3D, CD3E and CD247 enabling the recruitment of ZAP70. In turn ZAP70 phosphorylates LAT, which recruits numerous signaling molecules to form the LAT signalosome. The LAT signalosome propagates signal branching to three major signaling pathways, the calcium, the mitogen-activated protein kinase (MAPK) kinase and the nuclear factor NF-kappa-B (NF-kB) pathways, leading to the mobilization of transcription factors that are critical for gene expression and essential for T cell growth and differentiation. The T cell repertoire is generated in the thymus, by V-(D)-J rearrangement. This repertoire is then shaped by intrathymic selection events to generate a peripheral T cell pool of self-MH restricted, non-autoaggressive T cells. Post-thymic interaction of alpha-beta TR with the pMH complexes shapes TR structural and functional avidity. This is T cell receptor beta variable 5-6 from Homo sapiens (Human).